The chain runs to 426 residues: Serine--tRNA ligase (426 aa).

233 to 235 (TAE) lines the L-serine pocket. Residue 264–266 (RSE) coordinates ATP. An L-serine-binding site is contributed by E287. 351–354 (EISS) is a binding site for ATP. Residue S385 participates in L-serine binding.

This sequence belongs to the class-II aminoacyl-tRNA synthetase family. Type-1 seryl-tRNA synthetase subfamily. Homodimer. The tRNA molecule binds across the dimer.

The protein resides in the cytoplasm. The catalysed reaction is tRNA(Ser) + L-serine + ATP = L-seryl-tRNA(Ser) + AMP + diphosphate + H(+). It carries out the reaction tRNA(Sec) + L-serine + ATP = L-seryl-tRNA(Sec) + AMP + diphosphate + H(+). It functions in the pathway aminoacyl-tRNA biosynthesis; selenocysteinyl-tRNA(Sec) biosynthesis; L-seryl-tRNA(Sec) from L-serine and tRNA(Sec): step 1/1. Its function is as follows. Catalyzes the attachment of serine to tRNA(Ser). Is also able to aminoacylate tRNA(Sec) with serine, to form the misacylated tRNA L-seryl-tRNA(Sec), which will be further converted into selenocysteinyl-tRNA(Sec). This is Serine--tRNA ligase from Brachyspira hyodysenteriae (strain ATCC 49526 / WA1).